The sequence spans 313 residues: 3-ketodihydrosphingosine reductase TSC10 (313 aa).

Leu-12 serves as a coordination point for NADP(+). Positions 15, 17, and 19 each coordinate NADPH. Residues 15 to 19 carry the GXSXG motif; that stretch reads GGSQG. Position 20 (Leu-20) interacts with NADP(+). NADPH contacts are provided by Arg-47, Lys-51, and Asp-86. Residue Asp-86 participates in NADP(+) binding. Residue Ser-160 is the Proton donor of the active site. NADP(+) contacts are provided by Tyr-174, Lys-178, and Ser-207. Tyr-174 functions as the Proton acceptor in the catalytic mechanism. The active-site Lowers pKa of active site Tyr is Lys-178. A helical membrane pass occupies residues 278–298; it reads VFSWILGALLNITIVPIYMLI.

This sequence belongs to the short-chain dehydrogenases/reductases (SDR) family.

The protein resides in the endoplasmic reticulum membrane. The catalysed reaction is sphinganine + NADP(+) = 3-oxosphinganine + NADPH + H(+). It functions in the pathway lipid metabolism; sphingolipid metabolism. Catalyzes the reduction of 3'-oxosphinganine (3-ketodihydrosphingosine/KDS) to sphinganine (dihydrosphingosine/DHS), the second step of de novo sphingolipid biosynthesis. This is 3-ketodihydrosphingosine reductase TSC10 (TSC10) from Kluyveromyces lactis (strain ATCC 8585 / CBS 2359 / DSM 70799 / NBRC 1267 / NRRL Y-1140 / WM37) (Yeast).